An 862-amino-acid polypeptide reads, in one-letter code: Pentatricopeptide repeat-containing protein At1g74850, chloroplastic (862 aa).

The transit peptide at 1–66 (MNLAIPNPNS…DLVLGNPSVS (66 aa)) directs the protein to the chloroplast. 15 PPR repeats span residues 104–139 (SLND…WCKP), 140–174 (NEHI…GVSR), 175–209 (SVFS…KISP), 210–245 (SILT…GIQP), 246–280 (DIVT…GIVP), 281–315 (DLTT…GSLP), 316–350 (DITS…GCTP), 351–385 (NANT…NTDP), 386–420 (DAAT…NIEP), 421–455 (DMET…DIVP), 456–490 (SSKA…GSNP), 491–525 (SIET…GIPR), 526–560 (NRDT…RCDP), 561–595 (DERT…DILP), and 596–630 (SIMC…RVSN). The 89-residue stretch at 713–801 (VDVHRMSEGG…RIMCQRSQLK (89 aa)) folds into the Smr domain. Residues 831-862 (GTRASTSSDTNHSGNPTQRRTRTKKELAGSTA) form a disordered region. A compositionally biased stretch (polar residues) spans 833 to 848 (RASTSSDTNHSGNPTQ).

It belongs to the PPR family. P subfamily. As to expression, mostly expressed in leaves, stems and flowers, but barely in roots.

Its subcellular location is the plastid. The protein resides in the chloroplast. Functionally, involved in plastid gene expression. This is Pentatricopeptide repeat-containing protein At1g74850, chloroplastic (PTAC2) from Arabidopsis thaliana (Mouse-ear cress).